Reading from the N-terminus, the 103-residue chain is Large ribosomal subunit protein bL21 (103 aa).

Belongs to the bacterial ribosomal protein bL21 family. Part of the 50S ribosomal subunit. Contacts protein L20.

This protein binds to 23S rRNA in the presence of protein L20. The protein is Large ribosomal subunit protein bL21 of Escherichia coli O127:H6 (strain E2348/69 / EPEC).